We begin with the raw amino-acid sequence, 160 residues long: SsrA-binding protein (160 aa).

The interval 133–160 is disordered; sequence GKKLHDKRDTEKERDWKREQQRLLRDRG. Residues 138-160 are compositionally biased toward basic and acidic residues; it reads DKRDTEKERDWKREQQRLLRDRG.

This sequence belongs to the SmpB family.

The protein resides in the cytoplasm. Its function is as follows. Required for rescue of stalled ribosomes mediated by trans-translation. Binds to transfer-messenger RNA (tmRNA), required for stable association of tmRNA with ribosomes. tmRNA and SmpB together mimic tRNA shape, replacing the anticodon stem-loop with SmpB. tmRNA is encoded by the ssrA gene; the 2 termini fold to resemble tRNA(Ala) and it encodes a 'tag peptide', a short internal open reading frame. During trans-translation Ala-aminoacylated tmRNA acts like a tRNA, entering the A-site of stalled ribosomes, displacing the stalled mRNA. The ribosome then switches to translate the ORF on the tmRNA; the nascent peptide is terminated with the 'tag peptide' encoded by the tmRNA and targeted for degradation. The ribosome is freed to recommence translation, which seems to be the essential function of trans-translation. This chain is SsrA-binding protein, found in Rhizorhabdus wittichii (strain DSM 6014 / CCUG 31198 / JCM 15750 / NBRC 105917 / EY 4224 / RW1) (Sphingomonas wittichii).